The following is an 87-amino-acid chain: MLPKYYQNLPYNGKRIFEKFYDRSLQKYKSTQIATKLACCAVRKKYMLIDGKWQPRPDANNSDTTTSTEDSTTDTETEYSTTEDELA.

The segment at 52–87 is disordered; the sequence is KWQPRPDANNSDTTTSTEDSTTDTETEYSTTEDELA. Positions 71–87 are enriched in acidic residues; sequence STTDTETEYSTTEDELA.

This is an uncharacterized protein from Autographa californica nuclear polyhedrosis virus (AcMNPV).